A 606-amino-acid polypeptide reads, in one-letter code: Radial spoke head protein 3 homolog (606 aa).

The disordered stretch occupies residues 1–103 (MARSEARRQA…NSPEAPPLDG (103 aa)). The segment covering 15-46 (PRAVPEERALRERRQPRPRREPLESGAGDHRR) has biased composition (basic and acidic residues). Thr-331 carries the post-translational modification Phosphothreonine; by MAPK1. Residues 393–429 (AYEELRNIELAEVQRLEEQERRHREEKERRKQQQWQV) are a coiled coil. The segment at 520–606 (EGRHASVRPE…KSSKREELSQ (87 aa)) is disordered. The span at 547–556 (SQDQGASQAQ) shows a compositional bias: polar residues. Residues 572–604 (ARYAERVSSQERRLAEENDELTEMRKSSKREEL) are a coiled coil. The span at 573-606 (RYAERVSSQERRLAEENDELTEMRKSSKREELSQ) shows a compositional bias: basic and acidic residues.

The protein belongs to the flagellar radial spoke RSP3 family. In terms of assembly, component of the axonemal radial spoke 1 (RS1) and 2 (RS2) complexes, at least composed of spoke head proteins RSPH1, RSPH3, RSPH9 and the cilia-specific component RSPH4A or sperm-specific component RSPH6A, spoke stalk proteins RSPH14, DNAJB13, DYDC1, ROPN1L and NME5, and the RS1 complex-specific anchor protein IQUB. Interacts with IQUB. Interacts with phosphorylated MAPK1. Interacts with MEK1. Interacts with PKA regulatory subunits PRKAR1A and PRKAR1B. Interacts with RSPH1. Interacts with RSPH4A. Interacts with RSPH6A. Interacts with RSPH9. Interacts with LRRC23.

The protein localises to the cytoplasm. The protein resides in the cytoskeleton. It localises to the cilium axoneme. Its subcellular location is the flagellum axoneme. Functionally, functions as part of axonemal radial spoke complexes that play an important part in the motility of sperm and cilia. Functions as a protein kinase A-anchoring protein that scaffolds the cAMP-dependent protein kinase holoenzyme. May serve as a point of convergence for MAPK and PKA signaling in cilia. This chain is Radial spoke head protein 3 homolog (RSPH3), found in Bos taurus (Bovine).